A 215-amino-acid chain; its full sequence is Myelin protein zero-like protein 2 (215 aa).

Residues 1-26 (MYGKSPALVLPLLLSLQLTALCPTEA) form the signal peptide. The Ig-like V-type domain maps to 27–141 (VEIYTSGALE…DGLVGTIRLS (115 aa)). Topologically, residues 27 to 154 (VEIYTSGALE…TVPFSEIYFL (128 aa)) are extracellular. N-linked (GlcNAc...) asparagine glycosylation is found at asparagine 39 and asparagine 118. Residues cysteine 47 and cysteine 123 are joined by a disulfide bond. A helical membrane pass occupies residues 155-175 (AVAIGSACALMIIVVIVVVLF). The Cytoplasmic segment spans residues 176–215 (QHFRKKRWADRADKAEGTKSKEEEKLNQGNKVSVFVEDTD). Residues 187–201 (ADKAEGTKSKEEEKL) show a composition bias toward basic and acidic residues. The tract at residues 187-215 (ADKAEGTKSKEEEKLNQGNKVSVFVEDTD) is disordered.

Belongs to the myelin P0 protein family. Widely expressed. Expressed in the cochlea, in Deiters' cells, possibly at contact sites with the basilar membrane. Expressed in both outer and inner auditory hair cells. In the stria vascularis, detected in the basal cell layer. Not detected in thymocytes, lymphocytes, macrophage or dendritic cells.

Its subcellular location is the membrane. In terms of biological role, mediates homophilic cell-cell adhesion. The polypeptide is Myelin protein zero-like protein 2 (Mpzl2) (Mus musculus (Mouse)).